A 109-amino-acid polypeptide reads, in one-letter code: Hainantoxin-XVIII-3 (109 aa).

A signal peptide spans Met-1–Ala-18. The propeptide occupies Phe-19–Ala-46. 4 disulfides stabilise this stretch: Cys-47/Cys-62, Cys-55/Cys-68, Cys-59/Cys-108, and Cys-61/Cys-81.

The protein belongs to the neurotoxin 25 family. F7 subfamily. As to expression, expressed by the venom gland.

It localises to the secreted. In terms of biological role, putative ion channel inhibitor. This chain is Hainantoxin-XVIII-3, found in Cyriopagopus hainanus (Chinese bird spider).